We begin with the raw amino-acid sequence, 234 residues long: Bromodomain-containing protein DDB_G0271118 (234 aa).

The region spanning 1–60 is the Bromo domain; it reads MDLGTIKGELDNNGYSTIKDFTADVRLMFENALTYNADSSPIWKHAKTLLYFHRKHDEHV. The span at 134-194 shows a compositional bias: low complexity; it reads NNNSNNNNNN…SSSSSSSSSS (61 aa). The interval 134 to 209 is disordered; that stretch reads NNNSNNNNNN…KKYSDEERRN (76 aa).

This Dictyostelium discoideum (Social amoeba) protein is Bromodomain-containing protein DDB_G0271118.